Consider the following 200-residue polypeptide: Prolactin-2 (200 aa).

The signal sequence occupies residues 1 to 23 (MRQRRISGSNLMMVLCVVAMCRA). Cystine bridges form between Cys-64–Cys-173 and Cys-190–Cys-200.

Belongs to the somatotropin/prolactin family.

It localises to the secreted. The protein is Prolactin-2 (prl2) of Oreochromis mossambicus (Mozambique tilapia).